The primary structure comprises 955 residues: UPF0182 protein PMT_0755 (955 aa).

Transmembrane regions (helical) follow at residues 25-45, 58-78, 107-127, 146-166, 178-198, 214-234, 264-284, 313-333, and 340-360; these read LLLS…WLWF, WLWQ…CQLW, LLGC…LAWL, IWAL…MLGN, CFCF…ALAI, FGLG…AQLI, CNFL…LLWL, SLAS…TWIQ, and LIAS…APFV.

The protein belongs to the UPF0182 family.

Its subcellular location is the cell membrane. The sequence is that of UPF0182 protein PMT_0755 from Prochlorococcus marinus (strain MIT 9313).